The sequence spans 384 residues: DNA replication and repair protein RecF (384 aa).

Residue 30 to 37 (GNNAQGKS) participates in ATP binding.

It belongs to the RecF family.

The protein resides in the cytoplasm. Its function is as follows. The RecF protein is involved in DNA metabolism; it is required for DNA replication and normal SOS inducibility. RecF binds preferentially to single-stranded, linear DNA. It also seems to bind ATP. In Gloeothece citriformis (strain PCC 7424) (Cyanothece sp. (strain PCC 7424)), this protein is DNA replication and repair protein RecF.